Consider the following 134-residue polypeptide: Large ribosomal subunit protein uL16c (134 aa).

This sequence belongs to the universal ribosomal protein uL16 family. Part of the 50S ribosomal subunit.

It is found in the plastid. It localises to the chloroplast. The sequence is that of Large ribosomal subunit protein uL16c from Pinus koraiensis (Korean pine).